The primary structure comprises 217 residues: Ras-related protein Rab-39A (217 aa).

Ser17, Gly20, Lys21, Ser22, Cys23, and Thr44 together coordinate GTP. A Mg(2+)-binding site is contributed by Ser22. The tract at residues 39-47 is switch-I; that stretch reads PACDPTVGV. Thr44 and Asp68 together coordinate Mg(2+). Positions 71, 127, 128, 130, 158, and 159 each coordinate GTP. Residues 71-87 are switch-II; it reads GQERFRSITRSYYRNSV. 2 S-geranylgeranyl cysteine lipidation sites follow: Cys215 and Cys217. At Cys217 the chain carries Cysteine methyl ester.

This sequence belongs to the small GTPase superfamily. Rab family. As to quaternary structure, interacts (GDP-bound) with C9orf72; C9orf72 acts as a GEF for RAB39A. Interacts (GTP-bound) with HOPS complex components VPS39 and VPS41, and STX17; interaction between HOPS components and RAB39A contributes to obtaining a functional HOPS complex that promotes membrane fusion driven by STX17-SNAP29-VAMP8. Interacts with BECN1. Probably associates with the PI3K (PI3KC3/PI3K-III/class III phosphatidylinositol 3-kinase) complex. Interacts with UACA. Interacts with isoform a of RASSF1. Does not interact with isoform c of RASSF1. Requires Mg(2+) as cofactor. Post-translationally, prenylated. Prenylation is required for association with cellular membranes.

The protein resides in the cell membrane. It is found in the cytoplasmic vesicle. It localises to the phagosome membrane. The protein localises to the lysosome membrane. Its subcellular location is the autolysosome membrane. It carries out the reaction GTP + H2O = GDP + phosphate + H(+). Its activity is regulated as follows. Regulated by guanine nucleotide exchange factors (GEFs) including c9Orf72, which promote the exchange of bound GDP for free GTP. Regulated by GTPase activating proteins (GAPs) which increase the GTP hydrolysis activity. Inhibited by GDP dissociation inhibitors (GDIs). In terms of biological role, the small GTPases Rab are key regulators of intracellular membrane trafficking, from the formation of transport vesicles to their fusion with membranes. Rabs cycle between an inactive GDP-bound form and an active GTP-bound form that is able to recruit to membranes different sets of downstream effectors directly responsible for vesicle formation, movement, tethering and fusion. RAB39A regulates autophagosome-lysosome fusion via recruitment of the HOPS endosomal tethering complex onto lysosomes; this process involves lysosomal RAB39A and autophagosomal RAB2A recruitment of HOPS subcomplexes VPS41-VPS16-VPS18-VPS33A and VPS39-VPS11, respectively, which assemble into a functional complex to mediate membrane tethering and SNAREs-driven membrane fusion. Also negatively regulates lipopolysaccharide (LPS)-induced autophagosome formation in macrophages, possibly by implicating PI3K. Promotes the delivery of MHC-I molecules from the ER to phagosomes and the generation of peptide-loaded MHC-I complexes in phagosomes, thus enhancing antigen cross-presentation by dendritic cells. Plays a role in the maturation and acidification of phagosomes that engulf pathogens, such as S.aureus and M.tuberculosis. Plays a role in the fusion of phagosomes with lysosomes. May be involved in multiple neurite formation. In Homo sapiens (Human), this protein is Ras-related protein Rab-39A.